A 646-amino-acid polypeptide reads, in one-letter code: MMSKHPHSPSTPQDETPSVPGRRRFMNSAALAGLATVVACTDKGAPAGSAAATGVAATAEEHTVAGLHPKPGQLDTYYGLWSGGHTGDMRVMGMPSGREIHRIPMFVPDALVGWGITNESKKVMGTRPDGRLKYTVGDTHHVHASYKDGNYDGRYAWINDKINSRLGRVRLDYFICDKITELPNVQGFHGIFPDKRDPVDPQINYTTRVFCGGEFAIPLPNTAGIDDPAKYRSLFTCVDAESMEVRWQVLIDGNCDLVATSYDGKLAATNQYNTEMGAHYEDMMSAERDACLFFNVARIEAAVKAGRFKTIGDSKVPVVDGTHAANQDPKTALTAYVSVPKNPHGVNASPDQKYFICAGKLSPTATVIELARVLDWFDGKLAKIDDAIVAEVELGLGPLHTAFDGRGNAYTTLFLDSQIVKWNIDAAIRFHKGDKNAKYVVDRLDVHYQPGHLNASQSETVAADGKFLAVGCKFSKDRFLPVGPLHPENEQFIDISGDKMVLLQDHPIRSEPHDFIIFKRELLHPKQIYSLDDFPLATKDPKQSGVVRNGKKVTVRLTSQAPSYSLREFKLKKGDEVTLILTNLDKVEDLTHGFAIPKYDINFIVNPQETASVTFIADKPGVFWCYCTHFCHALHLEMRSRMIVEA.

The segment at 1–21 (MMSKHPHSPSTPQDETPSVPG) is disordered. Residues 1–52 (MMSKHPHSPSTPQDETPSVPGRRRFMNSAALAGLATVVACTDKGAPAGSAAA) constitute a signal peptide (tat-type signal). Residues His140, His141, and His189 each coordinate Cu cation. Ca(2+) is bound by residues Tyr272, Glu275, Met283, Asp289, and Asn342. Positions 344, 400, and 452 each coordinate Cu cation. Positions 473 and 488 each coordinate Ca(2+). Positions 513, 592, 627, 629, 631, 635, and 638 each coordinate Cu cation. The interval 551–646 (KKVTVRLTSQ…EMRSRMIVEA (96 aa)) is COX2-like.

Belongs to the NosZ family. It in the C-terminal section; belongs to the cytochrome c oxidase subunit 2 family. Homodimer. Requires Ca(2+) as cofactor. It depends on Cu cation as a cofactor. In terms of processing, predicted to be exported by the Tat system. The position of the signal peptide cleavage has not been experimentally proven.

The protein resides in the periplasm. The catalysed reaction is N2 + 2 Fe(III)-[cytochrome c] + H2O = nitrous oxide + 2 Fe(II)-[cytochrome c] + 2 H(+). It participates in nitrogen metabolism; nitrate reduction (denitrification); dinitrogen from nitrate: step 4/4. Its function is as follows. Nitrous-oxide reductase is part of a bacterial respiratory system which is activated under anaerobic conditions in the presence of nitrate or nitrous oxide. The sequence is that of Nitrous-oxide reductase (nosZ) from Ralstonia nicotianae (strain ATCC BAA-1114 / GMI1000) (Ralstonia solanacearum).